A 388-amino-acid chain; its full sequence is LL-diaminopimelate aminotransferase (388 aa).

Residues tyrosine 16 and glycine 41 each coordinate substrate. Pyridoxal 5'-phosphate-binding positions include tyrosine 70, 104–105 (SK), tyrosine 129, asparagine 179, tyrosine 210, and 239–241 (SLS). The substrate site is built by lysine 105, tyrosine 129, and asparagine 179. At lysine 242 the chain carries N6-(pyridoxal phosphate)lysine. Arginine 250 lines the pyridoxal 5'-phosphate pocket. Residue arginine 368 participates in substrate binding.

The protein belongs to the class-I pyridoxal-phosphate-dependent aminotransferase family. LL-diaminopimelate aminotransferase subfamily. In terms of assembly, homodimer. Pyridoxal 5'-phosphate serves as cofactor.

It carries out the reaction (2S,6S)-2,6-diaminopimelate + 2-oxoglutarate = (S)-2,3,4,5-tetrahydrodipicolinate + L-glutamate + H2O + H(+). Its pathway is amino-acid biosynthesis; L-lysine biosynthesis via DAP pathway; LL-2,6-diaminopimelate from (S)-tetrahydrodipicolinate (aminotransferase route): step 1/1. Involved in the synthesis of meso-diaminopimelate (m-DAP or DL-DAP), required for both lysine and peptidoglycan biosynthesis. Catalyzes the direct conversion of tetrahydrodipicolinate to LL-diaminopimelate. The chain is LL-diaminopimelate aminotransferase from Maridesulfovibrio salexigens (strain ATCC 14822 / DSM 2638 / NCIMB 8403 / VKM B-1763) (Desulfovibrio salexigens).